We begin with the raw amino-acid sequence, 253 residues long: MYEKEAISLQTSKRILVVPGDSVQISQDVVIDPQQILYLYKKDDNTFISTITALLDFENIDDKKKLRVIPLKGRYIPREGDIVIGIVVDVTLSSWIIDINSPYLSVLNASDYLGRSFNPLTDNIRKYLEIGDVVVGKIATFDRSRGPILTVQDKGLGKVVDGSLIEIEPIKVARVIGKKKSMLNMLIEQTKCDILVGNNGRIILRCPNPELEYIAILAIKKIESEAHTTGLTERIREFIIEEKVKRGLIKYEV.

One can recognise an S1 motif domain in the interval 80-153; sequence GDIVIGIVVD…SRGPILTVQD (74 aa).

The protein belongs to the RRP4 family. As to quaternary structure, component of the archaeal exosome complex. Forms a trimer of Rrp4 and/or Csl4 subunits. The trimer associates with a hexameric ring-like arrangement composed of 3 Rrp41-Rrp42 heterodimers.

The protein localises to the cytoplasm. Its function is as follows. Non-catalytic component of the exosome, which is a complex involved in RNA degradation. Increases the RNA binding and the efficiency of RNA degradation. Confers strong poly(A) specificity to the exosome. The polypeptide is Exosome complex component Rrp4 (Ignisphaera aggregans (strain DSM 17230 / JCM 13409 / AQ1.S1)).